The following is a 327-amino-acid chain: Aldo-keto reductase FVEG_12638 (327 aa).

D51 is an NADP(+) binding site. Residue Y56 is the Proton donor of the active site. H122 provides a ligand contact to substrate. Residues 152-153, 202-212, and 286-294 each bind NADP(+); these read SE, GPLGHGWLVED, and ENFTSRDIE.

The protein belongs to the aldo/keto reductase family. Aldo/keto reductase 2 subfamily.

Functionally, aldo-keto reductase; part of the Fusarium detoxification of benzoxazolinone cluster 2 (FDB2) involved in the degradation of benzoxazolinones produced by the host plant. Maize, wheat, and rye produce the 2 benzoxazinone phytoanticipins 2,4-dihy-droxy-7-methoxy-1,4-benzoxazin-3-one (DIMBOA) and 2,4-dihydroxy-1,4-benzoxazin-3-one (DIBOA) that, due to their inherent instability once released, spontaneously degrade to the more stable corresponding benzoxazolinones, 6-methoxy-2-benzoxazolinone (MBOA) and 2-benzoxazolinone (BOA), respectively. The first step in the detoxification of benzoxazolinones involves the hydrolysis of the cyclic ester bond of benzoxazolinones by the FDB1 cluster gamma-lactamase MBL1 to aminophenols. MBL1 is able to convert BOA into 2-aminophenol (2-AP), as well as MBOA into 5-methoxy-2-aminophenol (2-AMP). The FDB2 cluster N-malonyltransferase FDB2/NAT1 then metabolizes aminophenols via N-malonylation to non-toxic malonamic acids. FDB2/NAT1 converts 2-AP into N-(2-hydroxyphenyl) malonamic acid (HPMA) and 2-AMP into N-(2-hydroxy-4-methoxyphenyl) malonamic acid (HMPMA). The duplicated dienlactone hydrolases DLH1 and DLH2 may provide redundant function for hydrolyzing the lactone moiety in the BOA molecule. The roles of the amidases an other enzymes encoded by the 2 FDB clusters have not been identified so far. This chain is Aldo-keto reductase FVEG_12638, found in Gibberella moniliformis (strain M3125 / FGSC 7600) (Maize ear and stalk rot fungus).